A 768-amino-acid polypeptide reads, in one-letter code: Actin filament-associated protein 1-like 1 (768 aa).

The segment at 83-145 (LRDMSDDGEP…GKSPEYISSH (63 aa)) is disordered. Phosphoserine is present on residues Ser-87, Ser-93, Ser-97, Ser-103, and Ser-153. The span at 165–185 (SYPTTRMNGELKNSYNDSDAM) shows a compositional bias: polar residues. A disordered region spans residues 165–211 (SYPTTRMNGELKNSYNDSDAMSSSYESYDEEEEEEKGRQPKHQWPSE). Residues 220-316 (DCRICAFLLR…WLKVIREVSR (97 aa)) enclose the PH 1 domain. 2 positions are modified to phosphoserine: Ser-329 and Ser-343. The segment covering 340–349 (KRLSQEKQNS) has biased composition (basic and acidic residues). The segment at 340–382 (KRLSQEKQNSDSDSLGMNDSGSTLGRREACEHGKGKKNSLAEL) is disordered. Positions 350-362 (DSDSLGMNDSGST) are enriched in polar residues. The region spanning 418 to 512 (EVPCCGYLNV…WLGLLLVEMG (95 aa)) is the PH 2 domain. Tyr-557 bears the Phosphotyrosine mark. Positions 564–609 (KVQDEEPQRPTGAQVKRHASSCSEKSHRADPQVKVKRHASSANQYK) are disordered. Over residues 587-596 (EKSHRADPQV) the composition is skewed to basic and acidic residues. A coiled-coil region spans residues 611-701 (GKNRAEEDAR…AVKERLQQSL (91 aa)). The segment at 705 to 768 (PALGLSVSNK…KAKEWEMKKT (64 aa)) is disordered. A compositionally biased stretch (polar residues) spans 710–734 (SVSNKNKSQDTTNKPQSNAPEQSLP). Ser-747 bears the Phosphoserine mark. Residues 759–768 (KAKEWEMKKT) show a composition bias toward basic and acidic residues.

As to quaternary structure, interacts with CTTN.

It is found in the cytoplasm. Its subcellular location is the cell projection. It localises to the podosome. The protein localises to the invadopodium. The protein resides in the cytoskeleton. It is found in the stress fiber. Its function is as follows. May be involved in podosome and invadosome formation. The chain is Actin filament-associated protein 1-like 1 (Afap1l1) from Mus musculus (Mouse).